A 265-amino-acid polypeptide reads, in one-letter code: Urease accessory protein UreH (265 aa).

This sequence belongs to the UreD family. UreH, UreF and UreG form a complex that acts as a GTP-hydrolysis-dependent molecular chaperone, activating the urease apoprotein by helping to assemble the nickel containing metallocenter of UreC. The UreE protein probably delivers the nickel.

It localises to the cytoplasm. Its function is as follows. Required for maturation of urease via the functional incorporation of the urease nickel metallocenter. The protein is Urease accessory protein UreH of Helicobacter pylori (strain J99 / ATCC 700824) (Campylobacter pylori J99).